A 180-amino-acid chain; its full sequence is Inosine/xanthosine triphosphatase (180 aa).

Position 8–13 (8–13 (TTNPAK)) interacts with substrate. Asp38 contributes to the Mg(2+) binding site.

It belongs to the YjjX NTPase family. In terms of assembly, homodimer. It depends on Mg(2+) as a cofactor. Mn(2+) serves as cofactor.

The enzyme catalyses XTP + H2O = XDP + phosphate + H(+). The catalysed reaction is ITP + H2O = IDP + phosphate + H(+). In terms of biological role, phosphatase that hydrolyzes non-canonical purine nucleotides such as XTP and ITP to their respective diphosphate derivatives. Probably excludes non-canonical purines from DNA/RNA precursor pool, thus preventing their incorporation into DNA/RNA and avoiding chromosomal lesions. The chain is Inosine/xanthosine triphosphatase from Yersinia pseudotuberculosis serotype O:1b (strain IP 31758).